The following is a 555-amino-acid chain: Glutamine--tRNA ligase (555 aa).

The 'HIGH' region motif lies at 34–44 (PEPNGYLHIGH). ATP is bound by residues 35-37 (EPN) and 41-47 (HIGHAKS). Residues D67 and Y212 each contribute to the L-glutamine site. ATP is bound by residues T231, 261 to 262 (RL), and 269 to 271 (MSK). A 'KMSKS' region motif is present at residues 268–272 (IMSKR).

Belongs to the class-I aminoacyl-tRNA synthetase family. In terms of assembly, monomer.

It localises to the cytoplasm. The enzyme catalyses tRNA(Gln) + L-glutamine + ATP = L-glutaminyl-tRNA(Gln) + AMP + diphosphate. This is Glutamine--tRNA ligase from Erwinia tasmaniensis (strain DSM 17950 / CFBP 7177 / CIP 109463 / NCPPB 4357 / Et1/99).